The sequence spans 307 residues: Nicotinamide/nicotinic acid mononucleotide adenylyltransferase 2 (307 aa).

Residues serine 16 and phenylalanine 17 each contribute to the NAD(+) site. Residue histidine 24 participates in ATP binding. Positions 92 and 95 each coordinate NAD(+). Residues cysteine 164 and cysteine 165 are each lipidated (S-palmitoyl cysteine). The NAD(+) site is built by glycine 200, aspartate 202, leucine 212, tryptophan 213, and arginine 232. 271 to 274 contributes to the ATP binding site; sequence TKSR.

The protein belongs to the eukaryotic NMN adenylyltransferase family. In terms of assembly, monomer. Requires Mg(2+) as cofactor. Post-translationally, degraded in response to injured neurite. Degradation is caused by polyubiquitination by MYCBP2 after recognition by FBXO45. In terms of processing, palmitoylated; palmitoylation is required for membrane association. As to expression, expressed predominantly in the brain and nervous system.

It is found in the golgi apparatus membrane. The protein resides in the cytoplasmic vesicle membrane. It localises to the cytoplasm. The protein localises to the cell projection. Its subcellular location is the axon. It carries out the reaction beta-nicotinamide D-ribonucleotide + ATP + H(+) = diphosphate + NAD(+). The catalysed reaction is nicotinate beta-D-ribonucleotide + ATP + H(+) = deamido-NAD(+) + diphosphate. It participates in cofactor biosynthesis; NAD(+) biosynthesis; NAD(+) from nicotinamide D-ribonucleotide: step 1/1. Its pathway is cofactor biosynthesis; NAD(+) biosynthesis; deamido-NAD(+) from nicotinate D-ribonucleotide: step 1/1. Inhibited by P1-(adenosine-5')-P3-(nicotinamide-riboside-5')-triphosphate (Np3AD) and P1-(adenosine-5')-P4-(nicotinamide-riboside-5')-tetraphosphate (Np4AD). Nicotinamide/nicotinate-nucleotide adenylyltransferase that acts as an axon maintenance factor. Axon survival factor required for the maintenance of healthy axons: acts by delaying Wallerian axon degeneration, an evolutionarily conserved process that drives the loss of damaged axons. Catalyzes the formation of NAD(+) from nicotinamide mononucleotide (NMN) and ATP. Can also use the deamidated form; nicotinic acid mononucleotide (NaMN) as substrate but with a lower efficiency. Cannot use triazofurin monophosphate (TrMP) as substrate. Also catalyzes the reverse reaction, i.e. the pyrophosphorolytic cleavage of NAD(+). For the pyrophosphorolytic activity prefers NAD(+), NADH and NaAD as substrates and degrades nicotinic acid adenine dinucleotide phosphate (NHD) less effectively. Fails to cleave phosphorylated dinucleotides NADP(+), NADPH and NaADP(+). Also acts as an activator of ADP-ribosylation by supporting the catalytic activity of PARP16 and promoting mono-ADP-ribosylation of ribosomes by PARP16. May be involved in the maintenance of axonal integrity. The sequence is that of Nicotinamide/nicotinic acid mononucleotide adenylyltransferase 2 from Mus musculus (Mouse).